The following is a 168-amino-acid chain: Gastrula zinc finger protein XlCGF42.1 (168 aa).

6 consecutive C2H2-type zinc fingers follow at residues 6-28 (YSCS…RKSH), 34-56 (FCCS…YRTH), 62-84 (CICS…QKYH), 90-112 (FSCS…LRIH), 118-140 (YTCT…LRIH), and 146-165 (FTCS…DRHH).

It belongs to the krueppel C2H2-type zinc-finger protein family.

Its subcellular location is the nucleus. Functionally, may be involved in transcriptional regulation. The sequence is that of Gastrula zinc finger protein XlCGF42.1 from Xenopus laevis (African clawed frog).